The sequence spans 262 residues: R3H domain-containing protein 4 (262 aa).

Disordered stretches follow at residues 1–27 (MVALDNSEGGPEATPSGETRLSLPGCL) and 132–155 (YLEDESQGKRRRGPGRGEDRRRED). Over residues 146–155 (GRGEDRRRED) the composition is skewed to basic and acidic residues. One can recognise an R3H domain in the interval 182–245 (METLESWEER…RRQMKVSNRH (64 aa)).

It is found in the nucleus. The chain is R3H domain-containing protein 4 (R3hdm4) from Mus musculus (Mouse).